Here is a 97-residue protein sequence, read N- to C-terminus: Serine protease inhibitor Kazal-type 8 (97 aa).

An N-terminal signal peptide occupies residues 1–21 (MKGICSDAILVLATSMWMAFA). Residues 36 to 96 (DKTIVECLKN…TKLYDGQCEN (61 aa)) enclose the Kazal-like domain. Intrachain disulfides connect C42/C76, C49/C73, and C62/C94. N-linked (GlcNAc...) asparagine glycosylation occurs at N85.

The protein resides in the secreted. Functionally, probable serine protease inhibitor. This chain is Serine protease inhibitor Kazal-type 8 (SPINK8), found in Homo sapiens (Human).